Here is a 120-residue protein sequence, read N- to C-terminus: Large ribosomal subunit protein bL12 (120 aa).

The protein belongs to the bacterial ribosomal protein bL12 family. Homodimer. Part of the ribosomal stalk of the 50S ribosomal subunit. Forms a multimeric L10(L12)X complex, where L10 forms an elongated spine to which 2 to 4 L12 dimers bind in a sequential fashion. Binds GTP-bound translation factors.

Its function is as follows. Forms part of the ribosomal stalk which helps the ribosome interact with GTP-bound translation factors. Is thus essential for accurate translation. The chain is Large ribosomal subunit protein bL12 from Listeria monocytogenes serovar 1/2a (strain ATCC BAA-679 / EGD-e).